The chain runs to 342 residues: MDLTERHKRILKALVDEFIQENRPVGSKTLFDKHDIGLSPASIRTVLKDLEDYGYLASKHTSGGRIPTERGYRFYVDSLVILYELTLKEKQRIQQEYLKMQFKLDQILKATASVLSSLSNAAGIVIGPAKNLDTLKHLELIHVRGDEILMILVMRSGTVLHRNIFVDRNYSQEALYQVSKYLNDNLKGYDIYEIQNVVVPNLMVRRDGPEDFTRIAELLSSAMNPDNSEVTLYIDGFKNLYANFRDEEQQLSQVLSLLDDQGFLKEFFSEYIDQDGVYTIIGKDGNRSMSGVSIITSNYKMGEKKIGALGIIGPQRMDYNRALPLVDFTSKLVSEMVTRISK.

This sequence belongs to the HrcA family.

Negative regulator of class I heat shock genes (grpE-dnaK-dnaJ and groELS operons). Prevents heat-shock induction of these operons. This is Heat-inducible transcription repressor HrcA from Leptospira borgpetersenii serovar Hardjo-bovis (strain JB197).